The sequence spans 194 residues: Ion-translocating oxidoreductase complex subunit A (194 aa).

A run of 6 helical transmembrane segments spans residues 4 to 24 (LALI…QFLG), 39 to 59 (IGLS…SHIL), 72 to 92 (LRTI…EMLV), 102 to 122 (VLGI…VALL), 135 to 155 (TTQG…FAAL), and 172 to 192 (AIGM…SGLV).

Belongs to the NqrDE/RnfAE family. In terms of assembly, the complex is composed of six subunits: RnfA, RnfB, RnfC, RnfD, RnfE and RnfG.

It localises to the cell inner membrane. Part of a membrane-bound complex that couples electron transfer with translocation of ions across the membrane. The protein is Ion-translocating oxidoreductase complex subunit A of Pseudomonas aeruginosa (strain LESB58).